The primary structure comprises 309 residues: Glutaminase (309 aa).

Substrate is bound by residues serine 64, asparagine 114, glutamate 160, asparagine 167, tyrosine 191, tyrosine 243, and valine 261.

This sequence belongs to the glutaminase family. As to quaternary structure, homotetramer.

The catalysed reaction is L-glutamine + H2O = L-glutamate + NH4(+). The polypeptide is Glutaminase (Azorhizobium caulinodans (strain ATCC 43989 / DSM 5975 / JCM 20966 / LMG 6465 / NBRC 14845 / NCIMB 13405 / ORS 571)).